A 471-amino-acid polypeptide reads, in one-letter code: Regulator of microtubule dynamics protein 3 (471 aa).

Residues 1-9 are Mitochondrial intermembrane-facing; the sequence is MSSLGTLGG. Residues 10–32 form a helical membrane-spanning segment; that stretch reads ARAGLGLLLGTAAGLGFLCALYS. Residues 33 to 471 lie on the Cytoplasmic side of the membrane; that stretch reads QRWKRTQRRG…LEELEVILGE (439 aa). Residues 39-70 form a disordered region; sequence QRRGQSQSQSNSLDYTQTSEPGRQVRPLRAAP. The segment covering 41 to 50 has biased composition (low complexity); the sequence is RGQSQSQSNS. 4 positions are modified to phosphoserine: Ser-44, Ser-46, Ser-50, and Ser-57. Residues 90 to 123 adopt a coiled-coil conformation; the sequence is LDRLEFVLTSLVALRREVEELRSSLQGLAGQIVG. The FFAT signature appears at 156 to 162; it reads VYFTAAS. A Phosphothreonine modification is found at Thr-159. Positions 169–206 are disordered; the sequence is AESEGGYTTANAESDYERDSERESDGDGEDEVSCETVK. Phosphoserine is present on residues Ser-182, Ser-192, Ser-212, and Ser-233. Over residues 183–193 the composition is skewed to basic and acidic residues; it reads DYERDSERESD.

The protein belongs to the RMDN family. As to quaternary structure, interacts with PTPN2. Interacts with microtubules. Interacts with VAPB. Interacts (via FFAT motif) with MOSPD2 (via MSP domain). Interacts (via phosphorylated FFAT motif) with MOSPD2, VAPA and VAPB. Phosphorylation at Thr-160 of the FFAT motif activates interaction with MOSPD2, VAPA and VAPB.

Its subcellular location is the mitochondrion outer membrane. The protein resides in the cytoplasm. The protein localises to the nucleus. It is found in the cytoskeleton. It localises to the spindle. Its subcellular location is the spindle pole. Functionally, involved in cellular calcium homeostasis regulation. May participate in differentiation and apoptosis of keratinocytes. Overexpression induces apoptosis. This Bos taurus (Bovine) protein is Regulator of microtubule dynamics protein 3.